The primary structure comprises 411 residues: Probable indole-3-pyruvate monooxygenase YUCCA4 (411 aa).

21 to 26 is a binding site for FAD; that stretch reads GAGPSG. NADP(+) is bound at residue 183 to 188; it reads GCGNSG.

Belongs to the FMO family. Requires FAD as cofactor. As to expression, expressed in leaves, stems, flowers, buds and siliques. Detected in the apical gynoecium and in the developing ovules.

The protein resides in the cytoplasm. Its subcellular location is the endoplasmic reticulum membrane. It catalyses the reaction indole-3-pyruvate + NADPH + O2 + H(+) = (indol-3-yl)acetate + CO2 + NADP(+) + H2O. It functions in the pathway plant hormone metabolism; auxin biosynthesis. Functionally, involved in auxin biosynthesis. Both isoforms are catalitically active. Involved during embryogenesis and seedling development. Required for the formation of floral organs and vascular tissues. Belongs to the set of redundant YUCCA genes probably responsible for auxin biosynthesis in shoots. The polypeptide is Probable indole-3-pyruvate monooxygenase YUCCA4 (YUC4) (Arabidopsis thaliana (Mouse-ear cress)).